Here is a 393-residue protein sequence, read N- to C-terminus: Chalcone synthase 1 (393 aa).

Cysteine 166 is a catalytic residue.

This sequence belongs to the thiolase-like superfamily. Chalcone/stilbene synthases family.

It catalyses the reaction (E)-4-coumaroyl-CoA + 3 malonyl-CoA + 3 H(+) = 2',4,4',6'-tetrahydroxychalcone + 3 CO2 + 4 CoA. It functions in the pathway secondary metabolite biosynthesis; flavonoid biosynthesis. Functionally, the primary product of this enzyme is 4,2',4',6'-tetrahydroxychalcone (also termed naringenin-chalcone or chalcone) which can under specific conditions spontaneously isomerize into naringenin. This is Chalcone synthase 1 (CHS1) from Ruta graveolens (Common rue).